The primary structure comprises 1940 residues: Myosin-3 (1940 aa).

The Myosin N-terminal SH3-like domain maps to 33-82; sequence DAKTYCFVVDSKEEYAKGKIKSSQDGKVTVETEDNRTLVVKPEDVYAMNP. One can recognise a Myosin motor domain in the interval 86–779; it reads DRIEDMAMLT…LLGTLEEMRD (694 aa). K130 carries the post-translational modification N6,N6,N6-trimethyllysine. 179–186 contacts ATP; sequence GESGAGKT. 2 actin-binding regions span residues 656–678 and 758–772; these read LNKLMSNLRTTHPHFVRCIIPNE and KFGHTKVFFKAGLLG. One can recognise an IQ domain in the interval 782 to 811; the sequence is LAKLITRTQAVCRGFLMRVEFQKMVQRRES. Residues 840-1933 adopt a coiled-coil conformation; that stretch reads LLKSAETEKE…KTRDFTSSRM (1094 aa).

The protein belongs to the TRAFAC class myosin-kinesin ATPase superfamily. Myosin family. Muscle myosin is a hexameric protein that consists of 2 heavy chain subunits (MHC), 2 alkali light chain subunits (MLC) and 2 regulatory light chain subunits (MLC-2). Expressed in fetal bone, thymus, placenta, heart, brain, and liver.

The protein localises to the cytoplasm. Its subcellular location is the myofibril. Its function is as follows. Muscle contraction. In Homo sapiens (Human), this protein is Myosin-3 (MYH3).